Consider the following 210-residue polypeptide: Glycerol-3-phosphate acyltransferase (210 aa).

The next 6 helical transmembrane spans lie at 8-28 (LILL…LLLT), 56-76 (GLAA…VLIA), 87-107 (TMAV…WLGF), 119-139 (TIWV…LLVA), 144-164 (ISSA…VLLS), and 165-185 (GRPL…LIWA).

This sequence belongs to the PlsY family. In terms of assembly, probably interacts with PlsX.

It localises to the cell inner membrane. The catalysed reaction is an acyl phosphate + sn-glycerol 3-phosphate = a 1-acyl-sn-glycero-3-phosphate + phosphate. Its pathway is lipid metabolism; phospholipid metabolism. Functionally, catalyzes the transfer of an acyl group from acyl-phosphate (acyl-PO(4)) to glycerol-3-phosphate (G3P) to form lysophosphatidic acid (LPA). This enzyme utilizes acyl-phosphate as fatty acyl donor, but not acyl-CoA or acyl-ACP. The sequence is that of Glycerol-3-phosphate acyltransferase from Gluconobacter oxydans (strain 621H) (Gluconobacter suboxydans).